Here is a 348-residue protein sequence, read N- to C-terminus: Phosphate acyltransferase (348 aa).

It belongs to the PlsX family. In terms of assembly, homodimer. Probably interacts with PlsY.

Its subcellular location is the cytoplasm. It carries out the reaction a fatty acyl-[ACP] + phosphate = an acyl phosphate + holo-[ACP]. Its pathway is lipid metabolism; phospholipid metabolism. Catalyzes the reversible formation of acyl-phosphate (acyl-PO(4)) from acyl-[acyl-carrier-protein] (acyl-ACP). This enzyme utilizes acyl-ACP as fatty acyl donor, but not acyl-CoA. This Rhizobium etli (strain ATCC 51251 / DSM 11541 / JCM 21823 / NBRC 15573 / CFN 42) protein is Phosphate acyltransferase.